The primary structure comprises 754 residues: Lysyl oxidase homolog 3 (754 aa).

The signal sequence occupies residues 1 to 26; it reads MRAVSVWYCCPWGLLLLHCLCSFSVG. SRCR domains lie at 45–146, 170–283, 308–408, and 418–526; these read FRLA…VICK, VRLR…VSCV, VRLK…VRCN, and IRLS…VICS. Disulfide bonds link Cys-71–Cys-135, Cys-84–Cys-145, Cys-115–Cys-125, Cys-202–Cys-272, Cys-215–Cys-282, Cys-249–Cys-259, Cys-333–Cys-397, Cys-346–Cys-407, Cys-377–Cys-387, Cys-447–Cys-512, Cys-460–Cys-525, Cys-493–Cys-503, Cys-555–Cys-561, Cys-607–Cys-655, Cys-639–Cys-645, Cys-667–Cys-677, and Cys-714–Cys-728. Asn-112 carries N-linked (GlcNAc...) asparagine glycosylation. The N-linked (GlcNAc...) asparagine glycan is linked to Asn-267. Residues Asn-391 and Asn-482 are each glycosylated (N-linked (GlcNAc...) asparagine). Residues 530-733 are lysyl-oxidase like; it reads SDLLLHSALV…WVHNCHIGDA (204 aa). Positions 608, 610, and 612 each coordinate Cu cation. Asn-626 carries an N-linked (GlcNAc...) asparagine glycan. Residues 635-671 constitute a cross-link (lysine tyrosylquinone (Lys-Tyr)); the sequence is KASFCLEDTECQEDVSKRYECANFGEQGITVGCWDLY. Tyr-671 is subject to 2',4',5'-topaquinone.

Belongs to the lysyl oxidase family. Requires Cu cation as cofactor. It depends on lysine tyrosylquinone residue as a cofactor. Post-translationally, the lysine tyrosylquinone cross-link (LTQ) is generated by condensation of the epsilon-amino group of a lysine with a topaquinone produced by oxidation of tyrosine. Expressed in palate: predominantly present in the palate mesenchyme and tongue (at protein level). In spine, expressed in the original intervertebral disk, cartilage primordia, anterior and posterior longitudinal ligaments, meninges of spinal cord, lung and heart. In eyes, strongly expressed in the skin of the eyelid and weakly expressed in the cornea and sclera. In lung, predominantly expressed in the pulmonary mesenchyme. In developing muscle, expressed at myofiber ends (at protein level).

It localises to the secreted. Its subcellular location is the extracellular space. The protein resides in the cytoplasm. The protein localises to the nucleus. The catalysed reaction is L-lysyl-[protein] + O2 + H2O = (S)-2-amino-6-oxohexanoyl-[protein] + H2O2 + NH4(+). It catalyses the reaction N(6)-acetyl-L-lysyl-[protein] + O2 + H2O = acetamide + (S)-2-amino-6-oxohexanoyl-[protein] + H2O2. Functionally, protein-lysine 6-oxidase that mediates the oxidation of peptidyl lysine residues to allysine in target proteins. Catalyzes the post-translational oxidative deamination of peptidyl lysine residues in precursors of elastin and different types of collagens, a prerequisite in the formation of cross-links between collagens and elastin. Required for somite boundary formation by catalyzing oxidation of fibronectin (FN1), enhancing integrin signaling in myofibers and their adhesion to the myotendinous junction (MTJ). Acts as a regulator of inflammatory response by inhibiting differentiation of naive CD4(+) T-cells into T-helper Th17 or regulatory T-cells (Treg): acts by interacting with STAT3 in the nucleus and catalyzing both deacetylation and oxidation of lysine residues on STAT3, leading to disrupt STAT3 dimerization and inhibit STAT3 transcription activity. Oxidation of lysine residues to allysine on STAT3 preferentially takes place on lysine residues that are acetylated. Also able to catalyze deacetylation of lysine residues on STAT3. The sequence is that of Lysyl oxidase homolog 3 from Mus musculus (Mouse).